We begin with the raw amino-acid sequence, 541 residues long: Neutral amino acid transporter B(0) (541 aa).

Position 1 is an N-acetylmethionine (M1). Over residues 1 to 10 the composition is skewed to basic and acidic residues; the sequence is MVADPPKGDP. The interval 1–32 is disordered; the sequence is MVADPPKGDPKGLAAVEPTANGAPAQDPLEDS. Residues 1–52 are Cytoplasmic-facing; it reads MVADPPKGDPKGLAAVEPTANGAPAQDPLEDSGAAVGRCCSSRDQVRRCLRA. Residues 53 to 82 traverse the membrane as a helical segment; the sequence is NLLVLLTVVAVVAGVALGLAVSGAGGALAL. The Extracellular segment spans residues 83-95; the sequence is GPARLIAFAFPGE. A helical membrane pass occupies residues 96 to 117; the sequence is LLLRLLKMIILPLVVCSLVGGA. Residues 118-131 are Cytoplasmic-facing; sequence ASLDPSALGRLGAW. A helical membrane pass occupies residues 132–154; that stretch reads ALLFFLVTTLLASALGVGLALAL. Topologically, residues 155–225 are extracellular; that stretch reads QPGAAFAAMN…GTLVKVPVAH (71 aa). Residues N164 and N215 are each glycosylated (N-linked (GlcNAc...) asparagine). A helical transmembrane segment spans residues 226–249; the sequence is EEEGMNILGLVVFAIVFGVALRKL. Residues 250 to 258 lie on the Cytoplasmic side of the membrane; the sequence is GPEGEPLIR. A helical transmembrane segment spans residues 259-286; it reads FFNSFNDATMVLVSWIMWYAPVGILFLV. Residues 287–307 are Extracellular-facing; it reads ASKIVEMDDVGVLFASLGKYI. Residues 308 to 329 form a helical membrane-spanning segment; the sequence is LCCLLGHAIHGLLVLPLIYFLF. Residues 330–334 lie on the Cytoplasmic side of the membrane; the sequence is TRKNP. Positions 335–365 form an intramembrane region, discontinuously helical; sequence YRFLWGILTPLAMAFGTSSSSATLPLMMKCV. Topologically, residues 366–374 are cytoplasmic; the sequence is EERNGVAKH. A helical transmembrane segment spans residues 375 to 401; that stretch reads ISRFVLPIGATVNMDGAALFQCVAAVF. G383, T385, and N387 together coordinate Na(+). Over 402–414 the chain is Extracellular; sequence IAQLNRQSLDFVK. The segment at residues 415 to 448 is an intramembrane region (discontinuously helical); it reads IITILVTATASSVGAAGIPAGGVLTLAIILEAVS. Over 449 to 461 the chain is Extracellular; sequence LPVSEISLILAVD. Residues 462–483 traverse the membrane as a helical segment; sequence WLVDRSCTIINVEGDAFGAGLL. Na(+) contacts are provided by N472 and D476. At 484-541 the chain is on the cytoplasmic side; it reads QHYVDRTEQRGSEPELTQVKSEVPLGSLPAPNEEGNPLLRHSPGAAGDAGACEKESVM. The disordered stretch occupies residues 493–541; the sequence is RGSEPELTQVKSEVPLGSLPAPNEEGNPLLRHSPGAAGDAGACEKESVM. 3 positions are modified to phosphoserine: S495, S504, and S539.

It belongs to the dicarboxylate/amino acid:cation symporter (DAACS) (TC 2.A.23) family. SLC1A5 subfamily. As to quaternary structure, homotrimer.

The protein resides in the cell membrane. Its subcellular location is the melanosome. The enzyme catalyses L-glutamine(out) + L-serine(in) + Na(+)(out) = L-glutamine(in) + L-serine(out) + Na(+)(in). It catalyses the reaction L-glutamine(in) + L-serine(out) + Na(+)(out) = L-glutamine(out) + L-serine(in) + Na(+)(in). It carries out the reaction L-threonine(in) + L-glutamine(out) + Na(+)(out) = L-threonine(out) + L-glutamine(in) + Na(+)(in). The catalysed reaction is L-threonine(out) + L-glutamine(in) + Na(+)(out) = L-threonine(in) + L-glutamine(out) + Na(+)(in). The enzyme catalyses L-asparagine(in) + L-glutamine(out) + Na(+)(out) = L-asparagine(out) + L-glutamine(in) + Na(+)(in). It catalyses the reaction L-asparagine(out) + L-glutamine(in) + Na(+)(out) = L-asparagine(in) + L-glutamine(out) + Na(+)(in). It carries out the reaction L-glutamine(in) + L-alanine(out) + Na(+)(out) = L-glutamine(out) + L-alanine(in) + Na(+)(in). The catalysed reaction is L-valine(out) + L-glutamine(in) + Na(+)(out) = L-valine(in) + L-glutamine(out) + Na(+)(in). The enzyme catalyses L-glutamine(in) + L-methionine(out) + Na(+)(out) = L-glutamine(out) + L-methionine(in) + Na(+)(in). It catalyses the reaction L-glutamine(in) + L-glutamate(out) + Na(+)(out) + H(+)(out) = L-glutamine(out) + L-glutamate(in) + Na(+)(in) + H(+)(in). It carries out the reaction D-serine(in) + L-glutamine(out) + Na(+)(out) = D-serine(out) + L-glutamine(in) + Na(+)(in). The catalysed reaction is D-serine(in) + L-alanine(out) + Na(+)(out) = D-serine(out) + L-alanine(in) + Na(+)(in). The enzyme catalyses nitrate(in) = nitrate(out). It catalyses the reaction iodide(out) = iodide(in). It carries out the reaction thiocyanate(in) = thiocyanate(out). In terms of biological role, sodium-coupled antiporter of neutral amino acids. In a tri-substrate transport cycle, exchanges neutral amino acids between the extracellular and intracellular compartments, coupled to the inward cotransport of at least one sodium ion. The preferred substrate is the essential amino acid L-glutamine, a precursor for biosynthesis of proteins, nucleotides and amine sugars as well as an alternative fuel for mitochondrial oxidative phosphorylation. Exchanges L-glutamine with other neutral amino acids such as L-serine, L-threonine and L-asparagine in a bidirectional way. Provides L-glutamine to proliferating stem and activated cells driving the metabolic switch toward cell differentiation. The transport cycle is usually pH-independent, with the exception of L-glutamate. Transports extracellular L-glutamate coupled to the cotransport of one proton and one sodium ion in exchange for intracellular L-glutamine counter-ion. May provide for L-glutamate uptake in glial cells regulating glutamine/glutamate cycle in the nervous system. Can transport D-amino acids. Mediates D-serine release from the retinal glia potentially affecting NMDA receptor function in retinal neurons. Displays sodium- and amino acid-dependent but uncoupled channel-like anion conductance with a preference SCN(-) &gt;&gt; NO3(-) &gt; I(-) &gt; Cl(-). Through binding of the fusogenic protein syncytin-1/ERVW-1 may mediate trophoblasts syncytialization, the spontaneous fusion of their plasma membranes, an essential process in placental development. In Oryctolagus cuniculus (Rabbit), this protein is Neutral amino acid transporter B(0) (SLC1A5).